Reading from the N-terminus, the 427-residue chain is 3-phosphoshikimate 1-carboxyvinyltransferase (427 aa).

The 3-phosphoshikimate site is built by Lys20, Ser21, and Arg25. Lys20 provides a ligand contact to phosphoenolpyruvate. Positions 92 and 120 each coordinate phosphoenolpyruvate. Residues Ser166, Gln168, Asp312, and Lys339 each coordinate 3-phosphoshikimate. Gln168 lines the phosphoenolpyruvate pocket. Asp312 (proton acceptor) is an active-site residue. 2 residues coordinate phosphoenolpyruvate: Arg343 and Arg385.

This sequence belongs to the EPSP synthase family. Monomer.

The protein localises to the cytoplasm. The catalysed reaction is 3-phosphoshikimate + phosphoenolpyruvate = 5-O-(1-carboxyvinyl)-3-phosphoshikimate + phosphate. The protein operates within metabolic intermediate biosynthesis; chorismate biosynthesis; chorismate from D-erythrose 4-phosphate and phosphoenolpyruvate: step 6/7. In terms of biological role, catalyzes the transfer of the enolpyruvyl moiety of phosphoenolpyruvate (PEP) to the 5-hydroxyl of shikimate-3-phosphate (S3P) to produce enolpyruvyl shikimate-3-phosphate and inorganic phosphate. This chain is 3-phosphoshikimate 1-carboxyvinyltransferase, found in Streptococcus mutans serotype c (strain ATCC 700610 / UA159).